We begin with the raw amino-acid sequence, 403 residues long: Acetyl-CoA acetyltransferase IB (403 aa).

Cysteine 91 functions as the Acyl-thioester intermediate in the catalytic mechanism. Active-site proton acceptor residues include histidine 353 and cysteine 383. The short motif at 401–403 is the Microbody targeting signal element; that stretch reads AKL.

Belongs to the thiolase-like superfamily. Thiolase family. As to quaternary structure, multimeric.

It is found in the peroxisome. The catalysed reaction is 2 acetyl-CoA = acetoacetyl-CoA + CoA. The protein operates within metabolic intermediate biosynthesis; (R)-mevalonate biosynthesis; (R)-mevalonate from acetyl-CoA: step 1/3. The protein is Acetyl-CoA acetyltransferase IB (PACTB) of Candida tropicalis (Yeast).